The sequence spans 476 residues: Cysteine--tRNA ligase (476 aa).

Residue Cys31 coordinates Zn(2+). The 'HIGH' region motif lies at 33-43; it reads PTVYNYAHIGN. Zn(2+) contacts are provided by Cys211, His236, and Glu240. The short motif at 269–273 is the 'KMSKS' region element; that stretch reads KMSKS. Lys272 serves as a coordination point for ATP.

Belongs to the class-I aminoacyl-tRNA synthetase family. As to quaternary structure, monomer. Requires Zn(2+) as cofactor.

The protein localises to the cytoplasm. The enzyme catalyses tRNA(Cys) + L-cysteine + ATP = L-cysteinyl-tRNA(Cys) + AMP + diphosphate. The chain is Cysteine--tRNA ligase from Xanthomonas euvesicatoria pv. vesicatoria (strain 85-10) (Xanthomonas campestris pv. vesicatoria).